The following is a 260-amino-acid chain: Acetylglutamate kinase (260 aa).

Residues 45–46, R67, and N159 contribute to the substrate site; that span reads GG.

This sequence belongs to the acetylglutamate kinase family. ArgB subfamily.

It localises to the cytoplasm. It catalyses the reaction N-acetyl-L-glutamate + ATP = N-acetyl-L-glutamyl 5-phosphate + ADP. It participates in amino-acid biosynthesis; L-arginine biosynthesis; N(2)-acetyl-L-ornithine from L-glutamate: step 2/4. In terms of biological role, catalyzes the ATP-dependent phosphorylation of N-acetyl-L-glutamate. The chain is Acetylglutamate kinase from Colwellia psychrerythraea (strain 34H / ATCC BAA-681) (Vibrio psychroerythus).